Consider the following 220-residue polypeptide: 7-cyano-7-deazaguanine synthase (220 aa).

F10 to L20 provides a ligand contact to ATP. The Zn(2+) site is built by C186, C195, C198, and C201.

Belongs to the QueC family. In terms of assembly, homodimer. Zn(2+) serves as cofactor.

It catalyses the reaction 7-carboxy-7-deazaguanine + NH4(+) + ATP = 7-cyano-7-deazaguanine + ADP + phosphate + H2O + H(+). Its pathway is purine metabolism; 7-cyano-7-deazaguanine biosynthesis. In terms of biological role, catalyzes the ATP-dependent conversion of 7-carboxy-7-deazaguanine (CDG) to 7-cyano-7-deazaguanine (preQ(0)). The polypeptide is 7-cyano-7-deazaguanine synthase (Bacillus mycoides (strain KBAB4) (Bacillus weihenstephanensis)).